The sequence spans 519 residues: Cytochrome P450 52A12 (519 aa).

Cys-467 contacts heme.

This sequence belongs to the cytochrome P450 family. Heme serves as cofactor.

Its subcellular location is the membrane. Its function is as follows. Together with an NADPH cytochrome P450 the enzyme system catalyzes the terminal hydroxylation as the first step in the assimilation of alkanes and fatty acids. The chain is Cytochrome P450 52A12 (CYP52A12) from Debaryomyces hansenii (Yeast).